Here is a 287-residue protein sequence, read N- to C-terminus: Universal stress protein Slr1230 (287 aa).

Belongs to the universal stress protein A family.

The protein is Universal stress protein Slr1230 of Synechocystis sp. (strain ATCC 27184 / PCC 6803 / Kazusa).